The primary structure comprises 98 residues: Small ribosomal subunit protein bS20 (98 aa).

Basic residues predominate over residues 1 to 15 (MAPKKTTKKGGPKKR). Residues 1–21 (MAPKKTTKKGGPKKRPSAEKR) form a disordered region.

The protein belongs to the bacterial ribosomal protein bS20 family.

In terms of biological role, binds directly to 16S ribosomal RNA. The chain is Small ribosomal subunit protein bS20 from Chlamydia abortus (strain DSM 27085 / S26/3) (Chlamydophila abortus).